We begin with the raw amino-acid sequence, 157 residues long: 2-C-methyl-D-erythritol 2,4-cyclodiphosphate synthase (157 aa).

A divalent metal cation contacts are provided by aspartate 8 and histidine 10. Residues 8–10 (DVH) and 34–35 (HS) contribute to the 4-CDP-2-C-methyl-D-erythritol 2-phosphate site. An a divalent metal cation-binding site is contributed by histidine 42. 4-CDP-2-C-methyl-D-erythritol 2-phosphate is bound by residues 56 to 58 (DIG), 61 to 65 (FPDSD), 132 to 135 (TTTE), phenylalanine 139, and arginine 142.

It belongs to the IspF family. As to quaternary structure, homotrimer. A divalent metal cation is required as a cofactor.

The catalysed reaction is 4-CDP-2-C-methyl-D-erythritol 2-phosphate = 2-C-methyl-D-erythritol 2,4-cyclic diphosphate + CMP. It functions in the pathway isoprenoid biosynthesis; isopentenyl diphosphate biosynthesis via DXP pathway; isopentenyl diphosphate from 1-deoxy-D-xylulose 5-phosphate: step 4/6. In terms of biological role, involved in the biosynthesis of isopentenyl diphosphate (IPP) and dimethylallyl diphosphate (DMAPP), two major building blocks of isoprenoid compounds. Catalyzes the conversion of 4-diphosphocytidyl-2-C-methyl-D-erythritol 2-phosphate (CDP-ME2P) to 2-C-methyl-D-erythritol 2,4-cyclodiphosphate (ME-CPP) with a corresponding release of cytidine 5-monophosphate (CMP). In Syntrophomonas wolfei subsp. wolfei (strain DSM 2245B / Goettingen), this protein is 2-C-methyl-D-erythritol 2,4-cyclodiphosphate synthase.